The following is a 430-amino-acid chain: Adenylosuccinate synthetase (430 aa).

GTP-binding positions include 13–19 (GDEGKGK) and 41–43 (GHT). The active-site Proton acceptor is the Asp14. The Mg(2+) site is built by Asp14 and Gly41. IMP is bound by residues 14–17 (DEGK), 39–42 (NAGH), Thr130, Arg144, Gln225, Thr240, and Arg304. His42 acts as the Proton donor in catalysis. Residue 300–306 (STTGRAR) coordinates substrate. Residues Arg306, 332 to 334 (KLD), and 414 to 416 (STG) each bind GTP.

It belongs to the adenylosuccinate synthetase family. Homodimer. The cofactor is Mg(2+).

The protein resides in the cytoplasm. It carries out the reaction IMP + L-aspartate + GTP = N(6)-(1,2-dicarboxyethyl)-AMP + GDP + phosphate + 2 H(+). It participates in purine metabolism; AMP biosynthesis via de novo pathway; AMP from IMP: step 1/2. Plays an important role in the de novo pathway of purine nucleotide biosynthesis. Catalyzes the first committed step in the biosynthesis of AMP from IMP. The polypeptide is Adenylosuccinate synthetase (Pseudomonas putida (strain W619)).